We begin with the raw amino-acid sequence, 109 residues long: Large ribosomal subunit protein uL24 (109 aa).

The protein belongs to the universal ribosomal protein uL24 family. In terms of assembly, part of the 50S ribosomal subunit.

Its function is as follows. One of two assembly initiator proteins, it binds directly to the 5'-end of the 23S rRNA, where it nucleates assembly of the 50S subunit. One of the proteins that surrounds the polypeptide exit tunnel on the outside of the subunit. This chain is Large ribosomal subunit protein uL24, found in Ehrlichia chaffeensis (strain ATCC CRL-10679 / Arkansas).